The chain runs to 270 residues: Protein US2 homolog (270 aa).

Belongs to the herpesviridae US2 family.

This chain is Protein US2 homolog (MDV091), found in Gallid herpesvirus 2 (strain Chicken/Md5/ATCC VR-987) (GaHV-2).